Consider the following 526-residue polypeptide: Chaperonin GroEL, chloroplastic (526 aa).

ATP-binding positions include T29–P32, D86–T90, G412, D476–A478, and D492.

This sequence belongs to the chaperonin (HSP60) family. As to quaternary structure, forms a cylinder of 14 subunits composed of two heptameric rings stacked back-to-back. Interacts with the co-chaperonin GroES.

It localises to the plastid. The protein resides in the chloroplast. It carries out the reaction ATP + H2O + a folded polypeptide = ADP + phosphate + an unfolded polypeptide.. Functionally, together with its co-chaperonin GroES, plays an essential role in assisting protein folding. The GroEL-GroES system forms a nano-cage that allows encapsulation of the non-native substrate proteins and provides a physical environment optimized to promote and accelerate protein folding. This chain is Chaperonin GroEL, chloroplastic, found in Cyanidioschyzon merolae (strain NIES-3377 / 10D) (Unicellular red alga).